The sequence spans 287 residues: Myoblast determination protein 1 homolog B (287 aa).

The bHLH domain occupies 96-147; sequence DRRRAATMRERRRLSKVNDAFETLKRCTSTNPNQRLPKVDILRNAISYIDSL. 2 disordered regions span residues 161-202 and 231-277; these read NMEH…FYTD and QSPS…QLSH. Residues 168 to 188 are compositionally biased toward low complexity; sequence DSDASSPSSNCSDGMNSPPCS. The span at 267-277 shows a compositional bias: polar residues; that stretch reads SPGNSCTQLSH.

As to quaternary structure, efficient DNA binding requires dimerization with another bHLH protein.

The protein resides in the nucleus. Functionally, may act as a transcriptional activator that promotes transcription of muscle-specific target genes and plays a role in muscle differentiation. In Xenopus laevis (African clawed frog), this protein is Myoblast determination protein 1 homolog B (myod1-b).